The chain runs to 289 residues: 7-methylguanosine phosphate-specific 5'-nucleotidase (289 aa).

Catalysis depends on aspartate 38, which acts as the Nucleophile. Mg(2+) contacts are provided by aspartate 38 and aspartate 40. Catalysis depends on aspartate 40, which acts as the Proton donor. Glutamate 85 contacts CMP. Position 85 (glutamate 85) interacts with N(7)-methyl-GMP. Substrate-binding positions include 153-154 and lysine 202; that span reads SA. Residue aspartate 227 participates in Mg(2+) binding.

The protein belongs to the pyrimidine 5'-nucleotidase family. As to quaternary structure, monomer.

It localises to the cytoplasm. It catalyses the reaction N(7)-methyl-GMP + H2O = N(7)-methylguanosine + phosphate. The catalysed reaction is CMP + H2O = cytidine + phosphate. The enzyme catalyses a ribonucleoside 5'-phosphate + H2O = a ribonucleoside + phosphate. Functionally, specifically hydrolyzes 7-methylguanosine monophosphate (m(7)GMP) to 7-methylguanosine and inorganic phosphate. The specific activity for m(7)GMP may protect cells against undesired salvage of m(7)GMP and its incorporation into nucleic acids. Also has weak activity for CMP. UMP and purine nucleotides are poor substrates. This is 7-methylguanosine phosphate-specific 5'-nucleotidase (NT5C3B) from Gallus gallus (Chicken).